The sequence spans 208 residues: Holliday junction resolvase RecU (208 aa).

Residues 1–25 (MNYPNGKPFNRNKTKVGRTNDHKSS) form a disordered region. Positions 87, 89, 102, and 121 each coordinate Mg(2+).

This sequence belongs to the RecU family. It depends on Mg(2+) as a cofactor.

It is found in the cytoplasm. The enzyme catalyses Endonucleolytic cleavage at a junction such as a reciprocal single-stranded crossover between two homologous DNA duplexes (Holliday junction).. Functionally, endonuclease that resolves Holliday junction intermediates in genetic recombination. Cleaves mobile four-strand junctions by introducing symmetrical nicks in paired strands. Promotes annealing of linear ssDNA with homologous dsDNA. Required for DNA repair, homologous recombination and chromosome segregation. The protein is Holliday junction resolvase RecU of Staphylococcus carnosus (strain TM300).